The primary structure comprises 944 residues: Leucine--tRNA ligase (944 aa).

Residues 40 to 51 (PYPSGAGLHVGH) carry the 'HIGH' region motif. Positions 718 to 722 (KMSKS) match the 'KMSKS' region motif. Residue Lys-721 participates in ATP binding.

The protein belongs to the class-I aminoacyl-tRNA synthetase family.

Its subcellular location is the cytoplasm. The catalysed reaction is tRNA(Leu) + L-leucine + ATP = L-leucyl-tRNA(Leu) + AMP + diphosphate. The polypeptide is Leucine--tRNA ligase (Bacteroides thetaiotaomicron (strain ATCC 29148 / DSM 2079 / JCM 5827 / CCUG 10774 / NCTC 10582 / VPI-5482 / E50)).